The chain runs to 63 residues: DNA-directed RNA polymerases I, II, and III subunit RPABC4 (63 aa).

Cys24, Cys27, Cys41, and Cys44 together coordinate Zn(2+). Residues 24–44 (CADCGARNTIQAKEVIRCREC) form a C4-type zinc finger.

It belongs to the archaeal Rpo12/eukaryotic RPC10 RNA polymerase subunit family. Component of the RNA polymerase I (Pol I), RNA polymerase II (Pol II) and RNA polymerase III (Pol III) complexes consisting of 14, 12 and 17 subunits, respectively.

The protein localises to the nucleus. DNA-dependent RNA polymerase catalyzes the transcription of DNA into RNA using the four ribonucleoside triphosphates as substrates. Common component of RNA polymerases I, II and III which synthesize ribosomal RNA precursors, mRNA precursors and many functional non-coding RNAs, and a small RNAs, such as 5S rRNA and tRNAs, respectively. In Schizosaccharomyces pombe (strain 972 / ATCC 24843) (Fission yeast), this protein is DNA-directed RNA polymerases I, II, and III subunit RPABC4 (rpc10).